The primary structure comprises 406 residues: RNA exonuclease 4 (406 aa).

Residues 1-10 (MAPELSSNWK) are compositionally biased toward polar residues. Disordered stretches follow at residues 1-108 (MAPE…TLPS) and 156-181 (AGLT…PTDL). Composition is skewed to low complexity over residues 54–64 (SQQQQQASNPS), 72–82 (SQTQSQPSSQK), and 94–108 (SKPT…TLPS). The segment covering 162–173 (GHSSSSPKSNKN) has biased composition (polar residues). Residues 216 to 367 (YLSIDCEMVG…EDARVAMLLF (152 aa)) form the Exonuclease domain. Residues 377 to 387 (ENSNRYEEGQA) are compositionally biased toward basic and acidic residues. The tract at residues 377–406 (ENSNRYEEGQAKKGGNGGGGGGGKKKKGKK) is disordered. A compositionally biased stretch (gly residues) spans 388–398 (KKGGNGGGGGG).

This sequence belongs to the REXO4 family.

The protein localises to the nucleus. Its function is as follows. Exoribonuclease involved in ribosome biosynthesis. Involved in the processing of ITS1, the internal transcribed spacer localized between the 18S and 5.8S rRNAs. The polypeptide is RNA exonuclease 4 (rex-4) (Neurospora crassa (strain ATCC 24698 / 74-OR23-1A / CBS 708.71 / DSM 1257 / FGSC 987)).